The sequence spans 305 residues: Methionyl-tRNA formyltransferase (305 aa).

111 to 114 (SLLP) lines the (6S)-5,6,7,8-tetrahydrofolate pocket.

The protein belongs to the Fmt family.

The catalysed reaction is L-methionyl-tRNA(fMet) + (6R)-10-formyltetrahydrofolate = N-formyl-L-methionyl-tRNA(fMet) + (6S)-5,6,7,8-tetrahydrofolate + H(+). Its function is as follows. Attaches a formyl group to the free amino group of methionyl-tRNA(fMet). The formyl group appears to play a dual role in the initiator identity of N-formylmethionyl-tRNA by promoting its recognition by IF2 and preventing the misappropriation of this tRNA by the elongation apparatus. The protein is Methionyl-tRNA formyltransferase of Campylobacter jejuni subsp. jejuni serotype O:23/36 (strain 81-176).